The following is a 514-amino-acid chain: 1,25-dihydroxyvitamin D(3) 24-hydroxylase, mitochondrial (514 aa).

Residues 1–35 (MSCPIDKRRTLIAFLRRLRDLGQPPRSVTSKASAS) constitute a mitochondrion transit peptide. Residue C462 participates in heme binding.

This sequence belongs to the cytochrome P450 family. Heme serves as cofactor.

The protein resides in the mitochondrion. It carries out the reaction calcitriol + 2 reduced [adrenodoxin] + O2 + 2 H(+) = calcitetrol + 2 oxidized [adrenodoxin] + H2O. The catalysed reaction is calcitetrol + 2 reduced [adrenodoxin] + O2 + 2 H(+) = (1S)-1,25-dihydroxy-24-oxocalciol + 2 oxidized [adrenodoxin] + 2 H2O. It catalyses the reaction (1S)-1,25-dihydroxy-24-oxocalciol + 2 reduced [adrenodoxin] + O2 + 2 H(+) = (1S)-1,23,25-trihydroxy-24-oxocalciol + 2 oxidized [adrenodoxin] + H2O. The enzyme catalyses (1S)-1,23-dihydroxy-24,25,26,27-tetranorcalciol + 2 reduced [adrenodoxin] + O2 + 2 H(+) = (1S)-1-hydroxy-23-oxo-24,25,26,27-tetranorcalciol + 2 oxidized [adrenodoxin] + 2 H2O. It carries out the reaction (1S)-1-hydroxy-23-oxo-24,25,26,27-tetranorcalciol + 2 reduced [adrenodoxin] + O2 + H(+) = calcitroate + 2 oxidized [adrenodoxin] + H2O. The catalysed reaction is calcidiol + 2 reduced [adrenodoxin] + O2 + 2 H(+) = secalciferol + 2 oxidized [adrenodoxin] + H2O. It catalyses the reaction secalciferol + 2 reduced [adrenodoxin] + O2 + 2 H(+) = 25-hydroxy-24-oxocalciol + 2 oxidized [adrenodoxin] + 2 H2O. The enzyme catalyses 25-hydroxy-24-oxocalciol + 2 reduced [adrenodoxin] + O2 + 2 H(+) = 23S,25-dihydroxy-24-oxocholecalciferol + 2 oxidized [adrenodoxin] + H2O. It carries out the reaction 20S,23-dihydroxycholecalciferol + 2 reduced [adrenodoxin] + O2 + 2 H(+) = 20S,23,25-trihydroxycholecalciferol + 2 oxidized [adrenodoxin] + H2O. The catalysed reaction is 20S,23-dihydroxycholecalciferol + 2 reduced [adrenodoxin] + O2 + 2 H(+) = 20S,23,24-trihydroxycholecalciferol + 2 oxidized [adrenodoxin] + H2O. It catalyses the reaction 20S-hydroxycholecalciferol + 2 reduced [adrenodoxin] + O2 + 2 H(+) = 20S,25-dihydroxycholecalciferol + 2 oxidized [adrenodoxin] + H2O. The enzyme catalyses 20S-hydroxycholecalciferol + 2 reduced [adrenodoxin] + O2 + 2 H(+) = 20S,24S-dihydroxycholecalciferol + 2 oxidized [adrenodoxin] + H2O. It carries out the reaction 20S-hydroxycholecalciferol + 2 reduced [adrenodoxin] + O2 + 2 H(+) = 20S,24R-dihydroxycholecalciferol + 2 oxidized [adrenodoxin] + H2O. Functionally, a cytochrome P450 monooxygenase with a key role in vitamin D catabolism and calcium homeostasis. Via C24-oxidation pathway, catalyzes the inactivation of both the vitamin D precursor calcidiol (25-hydroxyvitamin D(3)) and the active hormone calcitriol (1-alpha,25-dihydroxyvitamin D(3)). With initial hydroxylation at C-24 (via C24-oxidation pathway), performs a sequential 6-step oxidation of calcitriol leading to the formation of the biliary metabolite calcitroic acid. Hydroxylates at C-24 or C-25 other vitamin D active metabolites, such as CYP11A1-derived secosteroids 20S-hydroxycholecalciferol and 20S,23-dihydroxycholecalciferol. Mechanistically, uses molecular oxygen inserting one oxygen atom into a substrate, and reducing the second into a water molecule, with two electrons provided by NADPH via FDXR/adrenodoxin reductase and FDX1/adrenodoxin. The sequence is that of 1,25-dihydroxyvitamin D(3) 24-hydroxylase, mitochondrial (Cyp24a1) from Rattus norvegicus (Rat).